Reading from the N-terminus, the 182-residue chain is Oligoribonuclease (182 aa).

The 164-residue stretch at 8–171 (LLWLDMEMTG…ADIYESIDEL (164 aa)) folds into the Exonuclease domain. Residue Y129 is part of the active site.

It belongs to the oligoribonuclease family.

Its subcellular location is the cytoplasm. In terms of biological role, 3'-to-5' exoribonuclease specific for small oligoribonucleotides. In Thiobacillus denitrificans (strain ATCC 25259 / T1), this protein is Oligoribonuclease.